The following is a 146-amino-acid chain: Hut operon positive regulatory protein (146 aa).

The protein belongs to the HutP family. As to quaternary structure, homohexamer.

Functionally, antiterminator that binds to cis-acting regulatory sequences on the mRNA in the presence of histidine, thereby suppressing transcription termination and activating the hut operon for histidine utilization. The sequence is that of Hut operon positive regulatory protein from Bacillus cereus (strain ZK / E33L).